Here is a 215-residue protein sequence, read N- to C-terminus: Endoplasmic reticulum vesicle protein 25 (215 aa).

An N-terminal signal peptide occupies residues 1–21 (MQSLITYIALVFSLFVSSAIG). Residues 22-184 (LHLEVPALPN…TNESTNSRVK (163 aa)) lie on the Lumenal side of the membrane. One can recognise a GOLD domain in the interval 34-125 (PVCIRDFVQE…VRSVELDIES (92 aa)). The helical transmembrane segment at 185 to 205 (WFSIVVIASLVGFGVWQIQYL) threads the bilayer. Over 206 to 215 (RHYFKVKHII) the chain is Cytoplasmic.

It belongs to the EMP24/GP25L family.

It localises to the endoplasmic reticulum membrane. Its subcellular location is the golgi apparatus membrane. Functionally, constituent of COPII-coated endoplasmic reticulum-derived transport vesicles. Required for efficient transport of a subset of secretory proteins to the Golgi. Facilitates retrograde transport from the Golgi to the endoplasmic reticulum. This chain is Endoplasmic reticulum vesicle protein 25 (ERV25), found in Candida albicans (strain SC5314 / ATCC MYA-2876) (Yeast).